The sequence spans 397 residues: Potassium channel subfamily K member 4 (397 aa).

Over 1-3 (MRS) the chain is Cytoplasmic. A helical membrane pass occupies residues 4–24 (TTLLALLALVLLYLVSGALVF). The Extracellular segment spans residues 25 to 88 (QALEQPHEQQ…WTNSSNHSSA (64 aa)). N-linked (GlcNAc...) asparagine glycosylation occurs at asparagine 81. The segment at residues 89–103 (WNLGSAFFFSGTIIT) is an intramembrane region (helical). Residues threonine 104, isoleucine 105, glycine 106, and tyrosine 107 each contribute to the K(+) site. The selectivity filter 1 stretch occupies residues 104 to 109 (TIGYGN). An intramembrane segment occupies 104-110 (TIGYGNI). Residues 111-118 (ALHTDAGR) are Extracellular-facing. Residues 119–151 (LFCIFYALVGIPLFGMLLAGVGDRLGSSLRRGI) traverse the membrane as a helical segment. The Cytoplasmic segment spans residues 152–173 (GHIEAVFLKWHVPPGLVRMLSA). Residues 174-195 (VLFLLIGCLLFVLTPTFVFSYM) traverse the membrane as a helical segment. Residues 196-200 (ESWSK) lie on the Extracellular side of the membrane. Positions 201–214 (LEAIYFVIVTLTTV) form an intramembrane region, helical. K(+)-binding residues include threonine 213, valine 214, glycine 215, and phenylalanine 216. The tract at residues 213 to 218 (TVGFGD) is selectivity filter 2. Residues 215-220 (GFGDYV) lie within the membrane without spanning it. The Extracellular portion of the chain corresponds to 221-234 (PGDGTGQNSPAYQP). Residues 235 to 261 (LVWFWILFGLAYFASVLTTIGNWLRAV) form a helical membrane-spanning segment. Residues 262 to 397 (SRRTRAEMGG…GRLRDKAVPV (136 aa)) are Cytoplasmic-facing. The segment covering 282-292 (TVTARVTQRTG) has biased composition (polar residues). Residues 282–397 (TVTARVTQRT…GRLRDKAVPV (116 aa)) are disordered. Basic residues predominate over residues 369 to 388 (PRGRRRPNPTKKPSRPRGPG).

It belongs to the two pore domain potassium channel (TC 1.A.1.8) family. As to quaternary structure, homodimer; disulfide-linked. Forms heterodimers with other 2-pore domain K(+) channel subunits, such as KCNK2 and KCNK10. As to expression, detected in brain, and at much lower levels in liver, skeletal muscle and testis.

It localises to the cell membrane. The protein resides in the cell projection. The protein localises to the axon. It catalyses the reaction K(+)(in) = K(+)(out). The enzyme catalyses Rb(+)(in) = Rb(+)(out). It carries out the reaction Cs(+)(in) = Cs(+)(out). With respect to regulation, activated by various stimuli including intracellular basic pH, mechanical stretch and heat and polyunsaturated fatty acids such as arachidonic acid. In terms of biological role, k(+) channel that conducts voltage-dependent outward rectifying currents upon membrane depolarization. Voltage sensing is coupled to K(+) electrochemical gradient in an 'ion flux gating' mode where outward but not inward ion flow opens the gate. Converts to voltage-independent 'leak' conductance mode upon stimulation by various stimuli including mechanical membrane stretch, basic pH, heat and lipids. Homo- and heterodimerizes to form functional channels with distinct regulatory and gating properties. At trigeminal A-beta afferent nerves, the heterodimer of KCNK2/TREK-1 and KCNK4/TRAAK is mostly coexpressed at nodes of Ranvier where it conducts voltage-independent mechanosensitive and thermosensitive currents, allowing rapid action potential repolarization, high speed and high frequence saltatory conduction on myelinated nerves to ensure prompt sensory responses. Permeable to other monovalent cations such as Rb(+) and Cs(+). The protein is Potassium channel subfamily K member 4 of Rattus norvegicus (Rat).